The following is a 395-amino-acid chain: S-adenosylmethionine synthase (395 aa).

Residue H18 coordinates ATP. D20 is a Mg(2+) binding site. E46 contributes to the K(+) binding site. Residues E59 and Q103 each coordinate L-methionine. The segment at 103–113 is flexible loop; the sequence is QSVDIAVGVDA. ATP contacts are provided by residues 170 to 172, 235 to 236, D244, 250 to 251, A267, and K271; these read DAK, KF, and RK. D244 is an L-methionine binding site. K275 contributes to the L-methionine binding site.

Belongs to the AdoMet synthase family. As to quaternary structure, homotetramer; dimer of dimers. Requires Mg(2+) as cofactor. It depends on K(+) as a cofactor.

It localises to the cytoplasm. The enzyme catalyses L-methionine + ATP + H2O = S-adenosyl-L-methionine + phosphate + diphosphate. The protein operates within amino-acid biosynthesis; S-adenosyl-L-methionine biosynthesis; S-adenosyl-L-methionine from L-methionine: step 1/1. Catalyzes the formation of S-adenosylmethionine (AdoMet) from methionine and ATP. The overall synthetic reaction is composed of two sequential steps, AdoMet formation and the subsequent tripolyphosphate hydrolysis which occurs prior to release of AdoMet from the enzyme. The protein is S-adenosylmethionine synthase of Acidiphilium cryptum (strain JF-5).